The primary structure comprises 412 residues: Alanyl-tRNA editing protein Aarsd1-B (412 aa).

Residues His-108, His-112, Cys-208, and His-212 each contribute to the Zn(2+) site.

This sequence belongs to the class-II aminoacyl-tRNA synthetase family. Alax-L subfamily. Zn(2+) is required as a cofactor.

The protein resides in the cytoplasm. In terms of biological role, functions in trans to edit the amino acid moiety from incorrectly charged tRNA(Ala). This is Alanyl-tRNA editing protein Aarsd1-B (aarsd1-b) from Xenopus laevis (African clawed frog).